The primary structure comprises 153 residues: Regulator of ribonuclease activity B (153 aa).

The disordered stretch occupies residues 114–153 (DPNADDDEYGDDGEFLDDEDEYGDDGEFFDDEDEEEPRVH). Residues 115–153 (PNADDDEYGDDGEFLDDEDEYGDDGEFFDDEDEEEPRVH) show a composition bias toward acidic residues.

It belongs to the RraB family. As to quaternary structure, interacts with the C-terminal region of Rne.

The protein resides in the cytoplasm. In terms of biological role, globally modulates RNA abundance by binding to RNase E (Rne) and regulating its endonucleolytic activity. Can modulate Rne action in a substrate-dependent manner by altering the composition of the degradosome. The chain is Regulator of ribonuclease activity B from Haemophilus influenzae (strain ATCC 51907 / DSM 11121 / KW20 / Rd).